Consider the following 288-residue polypeptide: Protoheme IX farnesyltransferase (288 aa).

A run of 9 helical transmembrane segments spans residues 8 to 28 (IIKP…FLLA), 35 to 55 (VNLF…ASIF), 75 to 95 (IAIG…LLIL), 105 to 125 (FLTI…YSLL), 130 to 150 (SVYS…IGYC), 161 to 181 (FILL…IGLV), 205 to 225 (INII…FFAG), 230 to 250 (NYLF…IKGF), and 265 to 285 (IFLF…IDYK).

This sequence belongs to the UbiA prenyltransferase family. Protoheme IX farnesyltransferase subfamily.

The protein resides in the cell membrane. The catalysed reaction is heme b + (2E,6E)-farnesyl diphosphate + H2O = Fe(II)-heme o + diphosphate. It participates in porphyrin-containing compound metabolism; heme O biosynthesis; heme O from protoheme: step 1/1. Converts heme B (protoheme IX) to heme O by substitution of the vinyl group on carbon 2 of heme B porphyrin ring with a hydroxyethyl farnesyl side group. This Wigglesworthia glossinidia brevipalpis protein is Protoheme IX farnesyltransferase.